Reading from the N-terminus, the 502-residue chain is Glucose-6-phosphate isomerase (502 aa).

Glu-331 (proton donor) is an active-site residue. Catalysis depends on residues His-362 and Lys-471.

This sequence belongs to the GPI family.

Its subcellular location is the cytoplasm. The enzyme catalyses alpha-D-glucose 6-phosphate = beta-D-fructose 6-phosphate. The protein operates within carbohydrate biosynthesis; gluconeogenesis. It functions in the pathway carbohydrate degradation; glycolysis; D-glyceraldehyde 3-phosphate and glycerone phosphate from D-glucose: step 2/4. Functionally, catalyzes the reversible isomerization of glucose-6-phosphate to fructose-6-phosphate. This Xylella fastidiosa (strain M12) protein is Glucose-6-phosphate isomerase.